Reading from the N-terminus, the 393-residue chain is NAD(P)H-quinone oxidoreductase subunit H, chloroplastic (393 aa).

Belongs to the complex I 49 kDa subunit family. As to quaternary structure, NDH is composed of at least 16 different subunits, 5 of which are encoded in the nucleus.

It is found in the plastid. The protein resides in the chloroplast thylakoid membrane. It carries out the reaction a plastoquinone + NADH + (n+1) H(+)(in) = a plastoquinol + NAD(+) + n H(+)(out). It catalyses the reaction a plastoquinone + NADPH + (n+1) H(+)(in) = a plastoquinol + NADP(+) + n H(+)(out). Its function is as follows. NDH shuttles electrons from NAD(P)H:plastoquinone, via FMN and iron-sulfur (Fe-S) centers, to quinones in the photosynthetic chain and possibly in a chloroplast respiratory chain. The immediate electron acceptor for the enzyme in this species is believed to be plastoquinone. Couples the redox reaction to proton translocation, and thus conserves the redox energy in a proton gradient. This is NAD(P)H-quinone oxidoreductase subunit H, chloroplastic from Saccharum hybrid (Sugarcane).